The primary structure comprises 1588 residues: Pentafunctional AROM polypeptide (1588 aa).

The segment at 1 to 392 is 3-dehydroquinate synthase; it reads MVQLAKVPIL…YGDSAQFVSD (392 aa). Residues 43–45, 78–81, 109–111, and aspartate 114 each bind NAD(+); these read DTN, ETSK, and GGV. Residue arginine 125 participates in 7-phospho-2-dehydro-3-deoxy-D-arabino-heptonate binding. 134 to 135 is a binding site for NAD(+); that stretch reads TS. The 7-phospho-2-dehydro-3-deoxy-D-arabino-heptonate site is built by aspartate 141 and lysine 147. Position 156 (lysine 156) interacts with NAD(+). Asparagine 157 serves as a coordination point for 7-phospho-2-dehydro-3-deoxy-D-arabino-heptonate. Residues 174–177 and asparagine 185 contribute to the NAD(+) site; that span reads WLET. Glutamate 189 serves as a coordination point for Zn(2+). 7-phospho-2-dehydro-3-deoxy-D-arabino-heptonate contacts are provided by residues 189-192 and lysine 258; that span reads EVIK. Glutamate 268 (proton acceptor; for 3-dehydroquinate synthase activity) is an active-site residue. 7-phospho-2-dehydro-3-deoxy-D-arabino-heptonate is bound by residues 272-276 and histidine 279; that span reads RNLLN. Residue histidine 279 coordinates Zn(2+). Catalysis depends on histidine 283, which acts as the Proton acceptor; for 3-dehydroquinate synthase activity. Residues histidine 295 and lysine 364 each contribute to the 7-phospho-2-dehydro-3-deoxy-D-arabino-heptonate site. Zn(2+) is bound at residue histidine 295. The tract at residues 405–871 is EPSP synthase; it reads VYPFKDIPAD…WDVLHSELGA (467 aa). Cysteine 853 functions as the For EPSP synthase activity in the catalytic mechanism. The segment at 890-1080 is shikimate kinase; it reads SVVIIGMRAA…IPSGRSAFVC (191 aa). Residue 895–902 participates in ATP binding; the sequence is GMRAAGKT. The interval 1081 to 1293 is 3-dehydroquinase; it reads LTFDDLTEQT…AAPGQLTVAQ (213 aa). Histidine 1198 serves as the catalytic Proton acceptor; for 3-dehydroquinate dehydratase activity. Lysine 1227 functions as the Schiff-base intermediate with substrate; for 3-dehydroquinate dehydratase activity in the catalytic mechanism. The tract at residues 1306-1588 is shikimate dehydrogenase; it reads PKELFVVGKP…KAIFDAVTKE (283 aa).

It in the N-terminal section; belongs to the sugar phosphate cyclases superfamily. Dehydroquinate synthase family. This sequence in the 2nd section; belongs to the EPSP synthase family. In the 3rd section; belongs to the shikimate kinase family. The protein in the 4th section; belongs to the type-I 3-dehydroquinase family. It in the C-terminal section; belongs to the shikimate dehydrogenase family. In terms of assembly, homodimer. Zn(2+) serves as cofactor.

Its subcellular location is the cytoplasm. It carries out the reaction 7-phospho-2-dehydro-3-deoxy-D-arabino-heptonate = 3-dehydroquinate + phosphate. It catalyses the reaction 3-dehydroquinate = 3-dehydroshikimate + H2O. The catalysed reaction is shikimate + NADP(+) = 3-dehydroshikimate + NADPH + H(+). The enzyme catalyses shikimate + ATP = 3-phosphoshikimate + ADP + H(+). It carries out the reaction 3-phosphoshikimate + phosphoenolpyruvate = 5-O-(1-carboxyvinyl)-3-phosphoshikimate + phosphate. It functions in the pathway metabolic intermediate biosynthesis; chorismate biosynthesis; chorismate from D-erythrose 4-phosphate and phosphoenolpyruvate: step 2/7. Its pathway is metabolic intermediate biosynthesis; chorismate biosynthesis; chorismate from D-erythrose 4-phosphate and phosphoenolpyruvate: step 3/7. The protein operates within metabolic intermediate biosynthesis; chorismate biosynthesis; chorismate from D-erythrose 4-phosphate and phosphoenolpyruvate: step 4/7. It participates in metabolic intermediate biosynthesis; chorismate biosynthesis; chorismate from D-erythrose 4-phosphate and phosphoenolpyruvate: step 5/7. It functions in the pathway metabolic intermediate biosynthesis; chorismate biosynthesis; chorismate from D-erythrose 4-phosphate and phosphoenolpyruvate: step 6/7. Functionally, the AROM polypeptide catalyzes 5 consecutive enzymatic reactions in prechorismate polyaromatic amino acid biosynthesis. In Saccharomyces cerevisiae (strain RM11-1a) (Baker's yeast), this protein is Pentafunctional AROM polypeptide.